We begin with the raw amino-acid sequence, 712 residues long: Envelope glycoprotein gp160 (712 aa).

The N-terminal stretch at 1–24 is a signal peptide; that stretch reads MCGRNQLFVASLLASACLIYCVQY. Residues 25-673 are Extracellular-facing; the sequence is VTVFYGVPVW…LTSWIKYIQY (649 aa). The N-linked (GlcNAc...) asparagine; by host glycan is linked to Asn36. Cys43 and Cys56 are disulfide-bonded. Asn69, Asn78, Asn113, Asn119, Asn131, Asn137, Asn145, Asn160, Asn173, Asn200, Asn232, Asn235, Asn242, Asn266, Asn272, Asn283, Asn294, Asn304, Asn359, Asn392, Asn402, Asn405, Asn442, Asn457, and Asn460 each carry an N-linked (GlcNAc...) asparagine; by host glycan. Cystine bridges form between Cys100/Cys208, Cys107/Cys199, Cys112/Cys157, Cys221/Cys251, and Cys231/Cys243. Residues 112 to 156 are V1; that stretch reads CNSTTAKNTTSTPTTTTTANTTIGENSSCIRTDNCTGLGEEEMVD. The tract at residues 157-199 is V2; it reads CQFNMTGLERDKKKLYNETWYSKDVVCESKDTKKEKTCYMNHC. Residues 299–331 form a V3 region; it reads CKRPGNKTVVPITLMSGLVFHSQPINRRPRQAW. Residues Cys299 and Cys332 are joined by a disulfide bond. 2 disulfide bridges follow: Cys384–Cys441 and Cys391–Cys414. A V4 region spans residues 391-414; that stretch reads CNMTWFLNWVENRTNQTQHNYVPC. Residues 457–463 form a V5 region; sequence NQTNITF. Positions 506–526 are fusion peptide; that stretch reads GVFVLGFLGFLTTAGAAMGAA. The tract at residues 569 to 585 is immunosuppression; sequence LQARVTAIEKYLKDQAQ. N-linked (GlcNAc...) asparagine; by host glycosylation is found at Asn605, Asn614, and Asn630. Residues 614–646 are a coiled coil; sequence NITWQEWEQRIRNLEANISESLEQAQIQQEKNM. Residues 651–672 are MPER; binding to GalCer; it reads KLNSWDVFSNWFDLTSWIKYIQ. A helical membrane pass occupies residues 674-694; it reads GVYIVVGIIVLRMVIYVVQML. The Cytoplasmic portion of the chain corresponds to 695-712; that stretch reads SRLRKGYRPVFSSPPAYS. Residues 701 to 704 carry the YXXV motif; contains endocytosis signal motif; sequence YRPV.

The mature envelope protein (Env) consists of a homotrimer of non-covalently associated gp120-gp41 heterodimers. The resulting complex protrudes from the virus surface as a spike. There seems to be as few as 10 spikes on the average virion. Interacts with human CD4, CCR5 and CXCR4, to form a P4HB/PDI-CD4-CXCR4-gp120 complex. Gp120 also interacts with the C-type lectins CD209/DC-SIGN and CLEC4M/DC-SIGNR (collectively referred to as DC-SIGN(R)). Gp120 and gp41 interact with GalCer. In terms of assembly, the mature envelope protein (Env) consists of a homotrimer of non-covalently associated gp120-gp41 heterodimers. The resulting complex protrudes from the virus surface as a spike. There seems to be as few as 10 spikes on the average virion. In terms of processing, specific enzymatic cleavages in vivo yield mature proteins. Envelope glycoproteins are synthesized as an inactive precursor that is heavily N-glycosylated and processed likely by host cell furin in the Golgi to yield the mature SU and TM proteins. The cleavage site between SU and TM requires the minimal sequence [KR]-X-[KR]-R.

The protein localises to the virion membrane. The protein resides in the host cell membrane. Its subcellular location is the host endosome membrane. Functionally, the surface protein gp120 (SU) attaches the virus to the host lymphoid cell by binding to the primary receptor CD4. This interaction induces a structural rearrangement creating a high affinity binding site for a chemokine coreceptor like CXCR4 and/or CCR5. This peculiar 2 stage receptor-interaction strategy allows gp120 to maintain the highly conserved coreceptor-binding site in a cryptic conformation, protected from neutralizing antibodies. Since CD4 also displays a binding site for the disulfide-isomerase P4HB/PDI, a P4HB/PDI-CD4-CXCR4-gp120 complex may form. In that complex, P4HB/PDI could reach and reduce gp120 disulfide bonds, causing major conformational changes in gp120. TXN, another PDI family member could also be involved in disulfide rearrangements in Env during fusion. These changes are transmitted to the transmembrane protein gp41 and are thought to activate its fusogenic potential by unmasking its fusion peptide. Its function is as follows. The surface protein gp120 is a ligand for CD209/DC-SIGN and CLEC4M/DC-SIGNR, which are respectively found on dendritic cells (DCs), and on endothelial cells of liver sinusoids and lymph node sinuses. These interactions allow capture of viral particles at mucosal surfaces by these cells and subsequent transmission to permissive cells. DCs are professional antigen presenting cells, critical for host immunity by inducing specific immune responses against a broad variety of pathogens. They act as sentinels in various tissues where they take up antigen, process it, and present it to T-cells following migration to lymphoid organs. HIV subverts the migration properties of dendritic cells to gain access to CD4+ T-cells in lymph nodes. Virus transmission to permissive T-cells occurs either in trans (without DCs infection, through viral capture and transmission), or in cis (following DCs productive infection, through the usual CD4-gp120 interaction), thereby inducing a robust infection. In trans infection, bound virions remain infectious over days and it is proposed that they are not degraded, but protected in non-lysosomal acidic organelles within the DCs close to the cell membrane thus contributing to the viral infectious potential during DCs' migration from the periphery to the lymphoid tissues. On arrival at lymphoid tissues, intact virions recycle back to DCs' cell surface allowing virus transmission to CD4+ T-cells. Virion capture also seems to lead to MHC-II-restricted viral antigen presentation, and probably to the activation of HIV-specific CD4+ cells. The transmembrane protein gp41 (TM) acts as a class I viral fusion protein. Under the current model, the protein has at least 3 conformational states: pre-fusion native state, pre-hairpin intermediate state, and post-fusion hairpin state. During fusion of viral and target intracellular membranes, the coiled coil regions (heptad repeats) assume a trimer-of-hairpins structure, positioning the fusion peptide in close proximity to the C-terminal region of the ectodomain. The formation of this structure appears to drive apposition and subsequent fusion of viral and target cell membranes. Complete fusion occurs in host cell endosomes and is dynamin-dependent, however some lipid transfer might occur at the plasma membrane. The virus undergoes clathrin-dependent internalization long before endosomal fusion, thus minimizing the surface exposure of conserved viral epitopes during fusion and reducing the efficacy of inhibitors targeting these epitopes. Membranes fusion leads to delivery of the nucleocapsid into the cytoplasm. In terms of biological role, the envelope glycoprotein gp160 precursor down-modulates cell surface CD4 antigen by interacting with it in the endoplasmic reticulum and blocking its transport to the cell surface. Functionally, the gp120-gp41 heterodimer seems to contribute to T-cell depletion during HIV-1 infection. The envelope glycoproteins expressed on the surface of infected cells induce apoptosis through an interaction with uninfected cells expressing the receptor (CD4) and the coreceptors CXCR4 or CCR5. This type of bystander killing may be obtained by at least three distinct mechanisms. First, the interaction between the 2 cells can induce cellular fusion followed by nuclear fusion within the syncytium. Syncytia are condemned to die from apoptosis. Second, the 2 interacting cells may not fuse entirely and simply exchange plasma membrane lipids, after a sort of hemifusion process, followed by rapid death. Third, it is possible that virus-infected cells, on the point of undergoing apoptosis, fuse with CD4-expressing cells, in which case apoptosis is rapidly transmitted from one cell to the other and thus occurs in a sort of contagious fashion. Its function is as follows. The gp120-gp41 heterodimer allows rapid transcytosis of the virus through CD4 negative cells such as simple epithelial monolayers of the intestinal, rectal and endocervical epithelial barriers. Both gp120 and gp41 specifically recognize glycosphingolipids galactosyl-ceramide (GalCer) or 3' sulfo-galactosyl-ceramide (GalS) present in the lipid rafts structures of epithelial cells. Binding to these alternative receptors allows the rapid transcytosis of the virus through the epithelial cells. This transcytotic vesicle-mediated transport of virions from the apical side to the basolateral side of the epithelial cells does not involve infection of the cells themselves. The protein is Envelope glycoprotein gp160 (env) of Homo sapiens (Human).